A 179-amino-acid chain; its full sequence is Large ribosomal subunit protein uL5 (179 aa).

It belongs to the universal ribosomal protein uL5 family. In terms of assembly, part of the 50S ribosomal subunit; part of the 5S rRNA/L5/L18/L25 subcomplex. Contacts the 5S rRNA and the P site tRNA. Forms a bridge to the 30S subunit in the 70S ribosome.

Its function is as follows. This is one of the proteins that bind and probably mediate the attachment of the 5S RNA into the large ribosomal subunit, where it forms part of the central protuberance. In the 70S ribosome it contacts protein S13 of the 30S subunit (bridge B1b), connecting the 2 subunits; this bridge is implicated in subunit movement. Contacts the P site tRNA; the 5S rRNA and some of its associated proteins might help stabilize positioning of ribosome-bound tRNAs. The protein is Large ribosomal subunit protein uL5 of Shewanella piezotolerans (strain WP3 / JCM 13877).